Here is a 72-residue protein sequence, read N- to C-terminus: Translation initiation factor IF-1 (72 aa).

The 72-residue stretch at 1 to 72 (MAKDDVIEIE…TKGRITYRFK (72 aa)) folds into the S1-like domain.

The protein belongs to the IF-1 family. In terms of assembly, component of the 30S ribosomal translation pre-initiation complex which assembles on the 30S ribosome in the order IF-2 and IF-3, IF-1 and N-formylmethionyl-tRNA(fMet); mRNA recruitment can occur at any time during PIC assembly.

It is found in the cytoplasm. Its function is as follows. One of the essential components for the initiation of protein synthesis. Stabilizes the binding of IF-2 and IF-3 on the 30S subunit to which N-formylmethionyl-tRNA(fMet) subsequently binds. Helps modulate mRNA selection, yielding the 30S pre-initiation complex (PIC). Upon addition of the 50S ribosomal subunit IF-1, IF-2 and IF-3 are released leaving the mature 70S translation initiation complex. This Ligilactobacillus salivarius (strain UCC118) (Lactobacillus salivarius) protein is Translation initiation factor IF-1.